Reading from the N-terminus, the 135-residue chain is ATP synthase epsilon chain (135 aa).

This sequence belongs to the ATPase epsilon chain family. F-type ATPases have 2 components, CF(1) - the catalytic core - and CF(0) - the membrane proton channel. CF(1) has five subunits: alpha(3), beta(3), gamma(1), delta(1), epsilon(1). CF(0) has three main subunits: a, b and c.

The protein localises to the cell inner membrane. Functionally, produces ATP from ADP in the presence of a proton gradient across the membrane. This Bradyrhizobium sp. (strain BTAi1 / ATCC BAA-1182) protein is ATP synthase epsilon chain.